The sequence spans 750 residues: Glutathione biosynthesis bifunctional protein GshAB (750 aa).

The interval 1–333 (MIIDRLLQRS…EANRLNDLIA (333 aa)) is glutamate--cysteine ligase. The disordered stretch occupies residues 32–51 (QPTQRVAQTPHPKTLGSRNY). In terms of domain architecture, ATP-grasp spans 489-747 (KKILDEKHFP…ITPRILAKLF (259 aa)). 516 to 574 (SQIQDKPIVVKPKSTNFGLGISIFKTSANLASYEKAIDIAFTEDSAILVEEYIEGTEYR) contributes to the ATP binding site. 3 residues coordinate Mg(2+): Asp696, Glu717, and Asn719. Asp696, Glu717, and Asn719 together coordinate Mn(2+).

This sequence in the N-terminal section; belongs to the glutamate--cysteine ligase type 1 family. Type 2 subfamily. As to quaternary structure, monomer. Mg(2+) serves as cofactor. Mn(2+) is required as a cofactor.

It carries out the reaction L-cysteine + L-glutamate + ATP = gamma-L-glutamyl-L-cysteine + ADP + phosphate + H(+). It catalyses the reaction gamma-L-glutamyl-L-cysteine + glycine + ATP = glutathione + ADP + phosphate + H(+). The protein operates within sulfur metabolism; glutathione biosynthesis; glutathione from L-cysteine and L-glutamate: step 1/2. It functions in the pathway sulfur metabolism; glutathione biosynthesis; glutathione from L-cysteine and L-glutamate: step 2/2. In terms of biological role, synthesizes glutathione from L-glutamate and L-cysteine via gamma-L-glutamyl-L-cysteine. In Streptococcus agalactiae serotype III (strain NEM316), this protein is Glutathione biosynthesis bifunctional protein GshAB.